Consider the following 103-residue polypeptide: Large ribosomal subunit protein bL21 (103 aa).

This sequence belongs to the bacterial ribosomal protein bL21 family. As to quaternary structure, part of the 50S ribosomal subunit. Contacts protein L20.

Functionally, this protein binds to 23S rRNA in the presence of protein L20. This Clostridium beijerinckii (strain ATCC 51743 / NCIMB 8052) (Clostridium acetobutylicum) protein is Large ribosomal subunit protein bL21.